The primary structure comprises 274 residues: Probable WRKY transcription factor 49 (274 aa).

The segment at residues 108-173 (NSNGMCDDGY…YEGFHFHYTY (66 aa)) is a DNA-binding region (WRKY). The disordered stretch occupies residues 188-228 (KTKIHKHNAQDMNKKSQTQEESKEAQLGELTNQNHPVNKAQ). A coiled-coil region spans residues 193-222 (KHNAQDMNKKSQTQEESKEAQLGELTNQNH). Over residues 195–213 (NAQDMNKKSQTQEESKEAQ) the composition is skewed to basic and acidic residues. A compositionally biased stretch (polar residues) spans 216 to 228 (ELTNQNHPVNKAQ).

Belongs to the WRKY group II-c family.

It localises to the nucleus. Functionally, transcription factor. Interacts specifically with the W box (5'-(T)TGAC[CT]-3'), a frequently occurring elicitor-responsive cis-acting element. This Arabidopsis thaliana (Mouse-ear cress) protein is Probable WRKY transcription factor 49 (WRKY49).